The primary structure comprises 183 residues: DELTA-miturgitoxin-Cp1c (183 aa).

The signal sequence occupies residues Met-1–Ser-20. Residues Glu-21–Arg-47 constitute a propeptide that is removed on maturation. Positions Asp-44–Arg-47 match the Processing quadruplet motif motif. 8 cysteine pairs are disulfide-bonded: Cys-51–Cys-66, Cys-58–Cys-75, Cys-65–Cys-88, Cys-77–Cys-86, Cys-115–Cys-130, Cys-122–Cys-139, Cys-129–Cys-157, and Cys-141–Cys-155. The tract at residues Gln-164–Ile-177 is predicted alpha-helix. Position 181 is a tryptophan amide (Trp-181).

Belongs to the neurotoxin 19 (CSTX) family. Double-CSTX subfamily. In terms of processing, cleavage of the propeptide depends on the processing quadruplet motif (XXXR, with at least one of X being E). As to expression, expressed by the venom gland.

It localises to the secreted. The protein resides in the target cell membrane. In terms of biological role, spider venom toxin that exhibits cytolytic activity by forming an alpha-helix across the membrane. Lethal to insect larvae. Causes instant paralysis and death in the larvae of the flesh fly (S.carnaria) at doses of 20 ug/g, at doses of less than 10 ug/g causes reversible paralysis. Has cytolytic activity against insect Sf9 cells. Causes stable and irreversible depolarization of fly muscle fibers, leading to contracture at higher toxin concentrations. Destabilizes membranes. The sequence is that of DELTA-miturgitoxin-Cp1c from Cheiracanthium punctorium (Yellow sac spider).